The following is a 242-amino-acid chain: Ribonuclease PH (242 aa).

Residues Arg89 and 127–129 (GTR) each bind phosphate.

It belongs to the RNase PH family. In terms of assembly, homohexameric ring arranged as a trimer of dimers.

It carries out the reaction tRNA(n+1) + phosphate = tRNA(n) + a ribonucleoside 5'-diphosphate. In terms of biological role, phosphorolytic 3'-5' exoribonuclease that plays an important role in tRNA 3'-end maturation. Removes nucleotide residues following the 3'-CCA terminus of tRNAs; can also add nucleotides to the ends of RNA molecules by using nucleoside diphosphates as substrates, but this may not be physiologically important. Probably plays a role in initiation of 16S rRNA degradation (leading to ribosome degradation) during starvation. This is Ribonuclease PH from Neisseria gonorrhoeae (strain ATCC 700825 / FA 1090).